The primary structure comprises 247 residues: UPF0280 protein Mevan_0550 (247 aa).

It belongs to the UPF0280 family.

The protein is UPF0280 protein Mevan_0550 of Methanococcus vannielii (strain ATCC 35089 / DSM 1224 / JCM 13029 / OCM 148 / SB).